The primary structure comprises 214 residues: Adenylate kinase (214 aa).

ATP is bound at residue 10–15 (GAGKGT). An NMP region spans residues 30–59 (STGDMLRAAVKAQTPVGLKAKAVMDRGELV). AMP-binding positions include threonine 31, arginine 36, 57-59 (ELV), 85-88 (GYPR), and glutamine 92. Residues 126 to 163 (GRFTCAKCGTGYHDRHKQPAREGVCDVCGSTEFKRRPD) form an LID region. ATP is bound at residue arginine 127. 4 residues coordinate Zn(2+): cysteine 130, cysteine 133, cysteine 150, and cysteine 153. AMP-binding residues include arginine 160 and arginine 172. Glycine 200 is an ATP binding site.

This sequence belongs to the adenylate kinase family. As to quaternary structure, monomer.

The protein localises to the cytoplasm. It catalyses the reaction AMP + ATP = 2 ADP. Its pathway is purine metabolism; AMP biosynthesis via salvage pathway; AMP from ADP: step 1/1. Catalyzes the reversible transfer of the terminal phosphate group between ATP and AMP. Plays an important role in cellular energy homeostasis and in adenine nucleotide metabolism. The protein is Adenylate kinase of Erythrobacter litoralis (strain HTCC2594).